The sequence spans 571 residues: Adenine deaminase (571 aa).

The protein belongs to the metallo-dependent hydrolases superfamily. Adenine deaminase family. It depends on Mn(2+) as a cofactor.

The catalysed reaction is adenine + H2O + H(+) = hypoxanthine + NH4(+). In Dehalococcoides mccartyi (strain CBDB1), this protein is Adenine deaminase.